Consider the following 1261-residue polypeptide: Myosin-1 (1261 aa).

The tract at residues 1–39 (MGHSRRPVGGEKKSRGFGRSKVADVGDGRQAGKPQVKKA) is disordered. Residues 49–728 (IGVSDLTLLS…TLFALEAMRD (680 aa)) enclose the Myosin motor domain. 142 to 149 (GESGAGKT) serves as a coordination point for ATP. At serine 370 the chain carries Phosphoserine. The interval 417 to 499 (SIGILDIYGF…PGVFAALNDA (83 aa)) is actin-binding. IQ domains are found at residues 732–752 (HNMA…RIEC) and 753–778 (AIRI…QGHQ). Residues 786–973 (RRRMSLLGSR…KSHTIHTSPG (188 aa)) enclose the TH1 domain. Disordered regions lie at residues 956 to 1093 (ASPN…KALY) and 1139 to 1261 (YLEE…DDEW). 4 stretches are compositionally biased toward pro residues: residues 1019–1029 (RPTPKPQPLPQ), 1038–1052 (IPAP…PVPQ), 1072–1084 (APPP…PPAP), and 1147–1159 (TPKP…PPAA). An SH3 domain is found at 1084 to 1145 (PKKATAKALY…PQAYLEEQVA (62 aa)). The span at 1160-1181 (PRASPVPSANGAAATAAAAKAK) shows a compositional bias: low complexity. Over residues 1212 to 1233 (VSMNSQDSSGGSGRGTPNSTSN) the composition is skewed to polar residues. Positions 1234–1243 (ASLAGGLAEA) are enriched in low complexity.

It belongs to the TRAFAC class myosin-kinesin ATPase superfamily. Myosin family. Phosphorylation of the TEDS site (Ser-370) is required for the polarization of the actin cytoskeleton. Phosphorylation probably activates the myosin-I ATPase activity.

The protein localises to the cytoplasm. It is found in the cytoskeleton. It localises to the actin patch. In terms of biological role, type-I myosin implicated in the organization of the actin cytoskeleton. Required for proper actin cytoskeleton polarization. At the cell cortex, assembles in patch-like structures together with proteins from the actin-polymerizing machinery and promotes actin assembly. Functions as actin nucleation-promoting factor (NPF) for the Arp2/3 complex. Plays an important role in polarized growth, spore germination, hyphal morphogenesis, and septal wall formation. The protein is Myosin-1 (myoA) of Aspergillus oryzae (strain ATCC 42149 / RIB 40) (Yellow koji mold).